The primary structure comprises 412 residues: Multifunctional CCA protein (412 aa).

Residues Gly8 and Arg11 each contribute to the ATP site. Residues Gly8 and Arg11 each contribute to the CTP site. Positions 21 and 23 each coordinate Mg(2+). The ATP site is built by Arg91, Arg137, and Arg140. CTP contacts are provided by Arg91, Arg137, and Arg140. An HD domain is found at 228-329 (TGIHTLMTLS…VKLFDSIDAW (102 aa)).

This sequence belongs to the tRNA nucleotidyltransferase/poly(A) polymerase family. Bacterial CCA-adding enzyme type 1 subfamily. Monomer. Can also form homodimers and oligomers. Requires Mg(2+) as cofactor. Ni(2+) serves as cofactor.

It catalyses the reaction a tRNA precursor + 2 CTP + ATP = a tRNA with a 3' CCA end + 3 diphosphate. The catalysed reaction is a tRNA with a 3' CCA end + 2 CTP + ATP = a tRNA with a 3' CCACCA end + 3 diphosphate. Catalyzes the addition and repair of the essential 3'-terminal CCA sequence in tRNAs without using a nucleic acid template. Adds these three nucleotides in the order of C, C, and A to the tRNA nucleotide-73, using CTP and ATP as substrates and producing inorganic pyrophosphate. tRNA 3'-terminal CCA addition is required both for tRNA processing and repair. Also involved in tRNA surveillance by mediating tandem CCA addition to generate a CCACCA at the 3' terminus of unstable tRNAs. While stable tRNAs receive only 3'-terminal CCA, unstable tRNAs are marked with CCACCA and rapidly degraded. The protein is Multifunctional CCA protein of Escherichia coli O157:H7.